We begin with the raw amino-acid sequence, 1325 residues long: Bile salt export pump (1325 aa).

The Cytoplasmic segment spans residues 1–62 (MSDAVILRSV…FSSTTDIWLM (62 aa)). In terms of domain architecture, ABC transmembrane type-1 1 spans 62–385 (MFVGSLCAFL…ASSCLEAFAT (324 aa)). The helical transmembrane segment at 63-83 (FVGSLCAFLHGLSHPGVLLIF) threads the bilayer. Residues 84–147 (GTMTDVFIAY…MIKFASYYAG (64 aa)) lie on the Extracellular side of the membrane. Residues N109, N116, N122, and N125 are each glycosylated (N-linked (GlcNAc...) asparagine). Residues 148-168 (IALLVLITGYIQICFWVIAAA) form a helical membrane-spanning segment. Residues 169-240 (RQIQKMRKIS…FLLGFYQGWK (72 aa)) are Cytoplasmic-facing. The chain crosses the membrane as a helical span at residues 241–261 (LTLVIISVSPLIGIGAAIIGL). The Extracellular segment spans residues 262-319 (SVSKFTDYELKAYAKAGSVADEVISSMRTVAAFGGEKKEVERYEKNLVFAQRWGIRKG). A helical membrane pass occupies residues 320 to 340 (IVMGFFTGFMWCLIFLCYALA). At 341–353 (FWYGSKLVLEDGE) the chain is on the cytoplasmic side. A helical membrane pass occupies residues 354 to 374 (YTAGTLVQIFLSILLGALNLG). 3 N-linked (GlcNAc...) asparagine glycosylation sites follow: N375, N424, and N440. Over 375-759 (NASSCLEAFA…KFNAPEWPYM (385 aa)) the chain is Extracellular. The region spanning 420–656 (IEFHNVTFHY…KGVYFTLVTL (237 aa)) is the ABC transporter 1 domain. 455–462 (GSSGSGKS) provides a ligand contact to ATP. N591 is a glycosylation site (N-linked (GlcNAc...) asparagine). The ABC transmembrane type-1 2 domain maps to 759 to 1047 (MLFGAVGAAV…ASSYTPSYAK (289 aa)). The chain crosses the membrane as a helical span at residues 760 to 780 (LFGAVGAAVNGSVTPLYAFLF). The Cytoplasmic portion of the chain corresponds to 781–798 (SQILGTFSLPDKEEQRSQ). A helical transmembrane segment spans residues 799 to 819 (INGVCLLFVAVGCVSLCTQFL). Over 820–894 (QGYAFAKSGE…NSFTNVTVAM (75 aa)) the chain is Extracellular. A glycan (N-linked (GlcNAc...) asparagine) is linked at N889. A helical transmembrane segment spans residues 895–915 (IIAFFFSWKLSLVIMCFFPFL). Residues 916–983 (ALSGALQTRM…PFKTAFRKAN (68 aa)) lie on the Cytoplasmic side of the membrane. Residues 984–1004 (VYGFCFGFSQCIVFVANSASY) traverse the membrane as a helical segment. The Extracellular segment spans residues 1005–1014 (RYGGYLIPNE). Residues 1015–1035 (GLHFSYVFRVISSVVLSATAL) traverse the membrane as a helical segment. Topologically, residues 1036-1325 (GRASSYTPSY…KLVTTGAPIS (290 aa)) are cytoplasmic. The ABC transporter 2 domain maps to 1082–1320 (VDFVDCKFTY…KGAYYKLVTT (239 aa)). 1117 to 1124 (GSSGCGKS) provides a ligand contact to ATP.

It belongs to the ABC transporter superfamily. ABCB family. Multidrug resistance exporter (TC 3.A.1.201) subfamily. Interacts with HAX1. Interacts with the adapter protein complex 2 (AP-2) throught AP2A2 or AP2A1; this interaction regulates cell membrane expression of ABCB11 through its internalization in a clathrin-dependent manner and its subsequent degradation. Post-translationally, N-glycosylated. Ubiquitinated; short-chain ubiquitination regulates cell-Surface expression of ABCB11. In terms of tissue distribution, liver.

Its subcellular location is the apical cell membrane. The protein localises to the recycling endosome membrane. It localises to the endosome. The protein resides in the cell membrane. It catalyses the reaction cholate(in) + ATP + H2O = cholate(out) + ADP + phosphate + H(+). The catalysed reaction is taurocholate(in) + ATP + H2O = taurocholate(out) + ADP + phosphate + H(+). It carries out the reaction glycocholate(in) + ATP + H2O = glycocholate(out) + ADP + phosphate + H(+). The enzyme catalyses glycochenodeoxycholate(in) + ATP + H2O = glycochenodeoxycholate(out) + ADP + phosphate + H(+). It catalyses the reaction taurochenodeoxycholate(in) + ATP + H2O = taurochenodeoxycholate(out) + ADP + phosphate + H(+). The catalysed reaction is glycoursodeoxycholate(in) + ATP + H2O = glycoursodeoxycholate(out) + ADP + phosphate + H(+). It carries out the reaction tauroursodeoxycholate(in) + ATP + H2O = tauroursodeoxycholate(out) + ADP + phosphate + H(+). The enzyme catalyses taurodeoxycholate(in) + ATP + H2O = taurodeoxycholate(out) + ADP + phosphate + H(+). It catalyses the reaction taurolithocholate 3-sulfate(in) + ATP + H2O = taurolithocholate 3-sulfate(out) + ADP + phosphate + H(+). The catalysed reaction is pravastatin(in) + ATP + H2O = pravastatin(out) + ADP + phosphate + H(+). With respect to regulation, the uptake of taurocholate is inhibited by taurolithocholate sulfate with an IC(50) of 9 uM. Pravastatin competitively inhibits the transport of taurocholic acid. Cyclosporin A, glibenclamide, rifampicin and troglitazonestrongly competitively inhibit the transport activity of taurocholate. The canalicular transport activity of taurocholate is strongly dependent on canalicular membrane cholesterol content. The uptake of taurocholate is increased by short- and medium-chain fatty acids. Cholesterol increases transport capacity of taurocholate without affecting the affinity for the substrate. Its function is as follows. Catalyzes the transport of the major hydrophobic bile salts, such as taurine and glycine-conjugated cholic acid across the canalicular membrane of hepatocytes in an ATP-dependent manner, therefore participates in hepatic bile acid homeostasis and consequently to lipid homeostasis through regulation of biliary lipid secretion in a bile salts dependent manner. Transports taurine-conjugated bile salts more rapidly than glycine-conjugated bile salts. Also transports non-bile acid compounds, such as pravastatin and fexofenadine in an ATP-dependent manner and may be involved in their biliary excretion. In Canis lupus familiaris (Dog), this protein is Bile salt export pump.